A 303-amino-acid polypeptide reads, in one-letter code: Diaminopimelate epimerase (303 aa).

Substrate contacts are provided by Asn-15 and Asn-72. Cys-81 functions as the Proton donor in the catalytic mechanism. Substrate-binding positions include 82 to 83 (GN), Asn-169, Asn-202, and 220 to 221 (ER). Cys-229 (proton acceptor) is an active-site residue. Residue 230-231 (GT) participates in substrate binding.

The protein belongs to the diaminopimelate epimerase family. Homodimer.

The protein resides in the cytoplasm. The catalysed reaction is (2S,6S)-2,6-diaminopimelate = meso-2,6-diaminopimelate. Its pathway is amino-acid biosynthesis; L-lysine biosynthesis via DAP pathway; DL-2,6-diaminopimelate from LL-2,6-diaminopimelate: step 1/1. Functionally, catalyzes the stereoinversion of LL-2,6-diaminopimelate (L,L-DAP) to meso-diaminopimelate (meso-DAP), a precursor of L-lysine and an essential component of the bacterial peptidoglycan. The protein is Diaminopimelate epimerase of Prochlorococcus marinus (strain MIT 9313).